A 400-amino-acid chain; its full sequence is 3-phenylpropionate/cinnamic acid dioxygenase ferredoxin--NAD(+) reductase component (400 aa).

5 to 36 (TIIIVGGGQAAAMAAASLRQQGFTGELHLFSD) lines the FAD pocket. Position 146–174 (146–174 (SVVIVGAGTIGLELAASATQRRCKVTVIE)) interacts with NAD(+).

Belongs to the bacterial ring-hydroxylating dioxygenase ferredoxin reductase family. As to quaternary structure, this dioxygenase system consists of four proteins: the two subunits of the hydroxylase component (HcaE and HcaF), a ferredoxin (HcaC) and a ferredoxin reductase (HcaD). FAD serves as cofactor.

It carries out the reaction 2 reduced [2Fe-2S]-[ferredoxin] + NAD(+) + H(+) = 2 oxidized [2Fe-2S]-[ferredoxin] + NADH. Its pathway is aromatic compound metabolism; 3-phenylpropanoate degradation. Part of the multicomponent 3-phenylpropionate dioxygenase, that converts 3-phenylpropionic acid (PP) and cinnamic acid (CI) into 3-phenylpropionate-dihydrodiol (PP-dihydrodiol) and cinnamic acid-dihydrodiol (CI-dihydrodiol), respectively. The sequence is that of 3-phenylpropionate/cinnamic acid dioxygenase ferredoxin--NAD(+) reductase component from Shigella sonnei (strain Ss046).